A 290-amino-acid polypeptide reads, in one-letter code: Bifunctional protein FolD 3 (290 aa).

NADP(+) is bound by residues 163–165 and I229; that span reads GHS.

It belongs to the tetrahydrofolate dehydrogenase/cyclohydrolase family. In terms of assembly, homodimer.

The catalysed reaction is (6R)-5,10-methylene-5,6,7,8-tetrahydrofolate + NADP(+) = (6R)-5,10-methenyltetrahydrofolate + NADPH. It carries out the reaction (6R)-5,10-methenyltetrahydrofolate + H2O = (6R)-10-formyltetrahydrofolate + H(+). It participates in one-carbon metabolism; tetrahydrofolate interconversion. Functionally, catalyzes the oxidation of 5,10-methylenetetrahydrofolate to 5,10-methenyltetrahydrofolate and then the hydrolysis of 5,10-methenyltetrahydrofolate to 10-formyltetrahydrofolate. The sequence is that of Bifunctional protein FolD 3 from Roseobacter denitrificans (strain ATCC 33942 / OCh 114) (Erythrobacter sp. (strain OCh 114)).